Consider the following 356-residue polypeptide: Tyrosine recombinase XerS (356 aa).

In terms of domain architecture, Core-binding (CB) spans 16-121 (LMPWFVLEYY…ALSSLYKYLT (106 aa)). The Tyr recombinase domain occupies 169–354 (KFLDYVENEY…VNDEQKNALD (186 aa)). Residues Arg-210, Lys-234, His-306, Arg-309, and His-332 contribute to the active site. Residue Tyr-341 is the O-(3'-phospho-DNA)-tyrosine intermediate of the active site.

This sequence belongs to the 'phage' integrase family. XerS subfamily.

Its subcellular location is the cytoplasm. FtsK is required for recombination. Its function is as follows. Site-specific tyrosine recombinase, which acts by catalyzing the cutting and rejoining of the recombining DNA molecules. Essential to convert dimers of the bacterial chromosome into monomers to permit their segregation at cell division. The protein is Tyrosine recombinase XerS of Streptococcus thermophilus (strain ATCC BAA-491 / LMD-9).